The primary structure comprises 96 residues: Aspartyl/glutamyl-tRNA(Asn/Gln) amidotransferase subunit C (96 aa).

The protein belongs to the GatC family. As to quaternary structure, heterotrimer of A, B and C subunits.

The enzyme catalyses L-glutamyl-tRNA(Gln) + L-glutamine + ATP + H2O = L-glutaminyl-tRNA(Gln) + L-glutamate + ADP + phosphate + H(+). The catalysed reaction is L-aspartyl-tRNA(Asn) + L-glutamine + ATP + H2O = L-asparaginyl-tRNA(Asn) + L-glutamate + ADP + phosphate + 2 H(+). Functionally, allows the formation of correctly charged Asn-tRNA(Asn) or Gln-tRNA(Gln) through the transamidation of misacylated Asp-tRNA(Asn) or Glu-tRNA(Gln) in organisms which lack either or both of asparaginyl-tRNA or glutaminyl-tRNA synthetases. The reaction takes place in the presence of glutamine and ATP through an activated phospho-Asp-tRNA(Asn) or phospho-Glu-tRNA(Gln). The protein is Aspartyl/glutamyl-tRNA(Asn/Gln) amidotransferase subunit C of Herpetosiphon aurantiacus (strain ATCC 23779 / DSM 785 / 114-95).